Consider the following 1026-residue polypeptide: HEAT repeat-containing protein 4 (1026 aa).

The tract at residues 135–175 (AVKTESSANPEKKLKKSKPASTVREAPRPLIHHPCMHPDML) is disordered. HEAT repeat units lie at residues 530–568 (LLPA…NIMQ), 724–760 (KLMT…QIRD), and 761–794 (KMVL…GQVS).

In Homo sapiens (Human), this protein is HEAT repeat-containing protein 4 (HEATR4).